The primary structure comprises 144 residues: Putative pre-16S rRNA nuclease (144 aa).

Belongs to the YqgF nuclease family.

The protein resides in the cytoplasm. Its function is as follows. Could be a nuclease involved in processing of the 5'-end of pre-16S rRNA. The sequence is that of Putative pre-16S rRNA nuclease from Prochlorococcus marinus (strain NATL1A).